A 287-amino-acid polypeptide reads, in one-letter code: Fructose-1,6-bisphosphatase class 1 (287 aa).

Mg(2+)-binding residues include E67, D87, L89, and D90. Substrate-binding positions include 90 to 93, Y195, and K225; that span reads DGSS. E231 is a binding site for Mg(2+).

The protein belongs to the FBPase class 1 family. As to quaternary structure, homotetramer. The cofactor is Mg(2+).

The protein resides in the cytoplasm. It catalyses the reaction beta-D-fructose 1,6-bisphosphate + H2O = beta-D-fructose 6-phosphate + phosphate. Its pathway is carbohydrate biosynthesis; gluconeogenesis. The protein is Fructose-1,6-bisphosphatase class 1 of Halobacterium salinarum (strain ATCC 29341 / DSM 671 / R1).